The sequence spans 203 residues: Urease accessory protein UreG (203 aa).

A GTP-binding site is contributed by Gly14–Thr21.

It belongs to the SIMIBI class G3E GTPase family. UreG subfamily. In terms of assembly, homodimer. UreD, UreF and UreG form a complex that acts as a GTP-hydrolysis-dependent molecular chaperone, activating the urease apoprotein by helping to assemble the nickel containing metallocenter of UreC. The UreE protein probably delivers the nickel.

The protein localises to the cytoplasm. Facilitates the functional incorporation of the urease nickel metallocenter. This process requires GTP hydrolysis, probably effectuated by UreG. In Rhizobium etli (strain ATCC 51251 / DSM 11541 / JCM 21823 / NBRC 15573 / CFN 42), this protein is Urease accessory protein UreG.